The primary structure comprises 92 residues: MSASDFEERVVTIPLRDARAEPNHKRADKAMILIREHLAKHFSVDEDAVRLDPSINEAAWARGRANTPSKIRVRAARFEEEGEAIVEAETAE.

N-acetylserine is present on Ser-2.

Belongs to the eukaryotic ribosomal protein eL31 family. Part of the 50S ribosomal subunit.

Functionally, binds to the 23S rRNA. Located at the polypeptide exit tunnel on the outside of the subunit. In Haloarcula marismortui (strain ATCC 43049 / DSM 3752 / JCM 8966 / VKM B-1809) (Halobacterium marismortui), this protein is Large ribosomal subunit protein eL31 (rpl31e).